The primary structure comprises 696 residues: Polyribonucleotide nucleotidyltransferase (696 aa).

Mg(2+) is bound by residues aspartate 483 and aspartate 489. The KH domain occupies proline 550–isoleucine 609. The region spanning glycine 619–lysine 687 is the S1 motif domain.

Belongs to the polyribonucleotide nucleotidyltransferase family. Mg(2+) is required as a cofactor.

Its subcellular location is the cytoplasm. It catalyses the reaction RNA(n+1) + phosphate = RNA(n) + a ribonucleoside 5'-diphosphate. Functionally, involved in mRNA degradation. Catalyzes the phosphorolysis of single-stranded polyribonucleotides processively in the 3'- to 5'-direction. The polypeptide is Polyribonucleotide nucleotidyltransferase (Geobacter sp. (strain M21)).